Here is a 263-residue protein sequence, read N- to C-terminus: Phosphate import ATP-binding protein PstB (263 aa).

Residues 17–258 (ISVKNLDFFY…PKRKETEDYI (242 aa)) form the ABC transporter domain. 49–56 (GPSGCGKS) contacts ATP.

This sequence belongs to the ABC transporter superfamily. Phosphate importer (TC 3.A.1.7) family. In terms of assembly, the complex is composed of two ATP-binding proteins (PstB), two transmembrane proteins (PstC and PstA) and a solute-binding protein (PstS).

It localises to the cell inner membrane. The catalysed reaction is phosphate(out) + ATP + H2O = ADP + 2 phosphate(in) + H(+). In terms of biological role, part of the ABC transporter complex PstSACB involved in phosphate import. Responsible for energy coupling to the transport system. The protein is Phosphate import ATP-binding protein PstB of Polaromonas sp. (strain JS666 / ATCC BAA-500).